The sequence spans 641 residues: Calpain-6 (641 aa).

Residues 26 to 343 (LFCDPTFLPE…FHKLNVCRNV (318 aa)) enclose the Calpain catalytic domain. Residues 344–495 (NNPVFGRKEL…IFSEVPVQLR (152 aa)) are domain III. A C2 domain is found at 498–621 (TLDMPKMSCW…YLRKKGGPTA (124 aa)).

Belongs to the peptidase C2 family. As to quaternary structure, interacts (via domain III) with microtubules. Interacts (via domain II) with ARHGEF2 (via the N-terminal zinc finger).

Its subcellular location is the cytoplasm. The protein localises to the perinuclear region. It localises to the cytoskeleton. It is found in the spindle. In terms of biological role, microtubule-stabilizing protein that may be involved in the regulation of microtubule dynamics and cytoskeletal organization. May act as a regulator of RAC1 activity through interaction with ARHGEF2 to control lamellipodial formation and cell mobility. Does not seem to have protease activity as it has lost the active site residues. In Mus musculus (Mouse), this protein is Calpain-6 (Capn6).